The sequence spans 64 residues: Alpha-conotoxin-like Ac1.1a (64 aa).

An N-terminal signal peptide occupies residues 1-21; sequence MGMRMMFTLFLLVVLTTTVVS. A propeptide spanning residues 22-47 is cleaved from the precursor; the sequence is YPSDSASDGRDDEAKDERSDMYELKR. 2 disulfides stabilise this stretch: C51/C56 and C52/C62. Position 62 is a cysteine amide (C62).

Belongs to the conotoxin A superfamily. Expressed by the venom duct.

The protein resides in the secreted. Alpha-conotoxins act on postsynaptic membranes, they bind to the nicotinic acetylcholine receptors (nAChR) and thus inhibit them. The protein is Alpha-conotoxin-like Ac1.1a of Conus achatinus (Little frog cone).